Consider the following 486-residue polypeptide: Nuclear distribution protein PAC1 (486 aa).

A coiled-coil region spans residues 66–99; that stretch reads STVLRLQKKIIDLENEISNLNNIINSTNSDNNGI. WD repeat units lie at residues 119–158, 164–205, 206–246, 249–291, 294–328, 329–368, 389–428, and 437–483; these read QCEN…NTIP, AHTR…RTLN, GHEH…SLKS, GHSE…GVAM, GHSH…FPTI, PLEL…IAPH, GHSS…ETGY, and GHDG…NSIK.

It belongs to the WD repeat LIS1/nudF family. In terms of assembly, self-associates. Interacts with NDL1 and dynein.

The protein localises to the cytoplasm. The protein resides in the cytoskeleton. It is found in the spindle pole. Positively regulates the activity of the minus-end directed microtubule motor protein dynein. Plays a central role in positioning the mitotic spindle at the bud neck during cell division. Targets cytoplasmic dynein to microtubule plus ends, thereby promoting dynein-mediated microtubule sliding along the bud cortex and consequently the movement of the mitotic spindle to the bud neck. The sequence is that of Nuclear distribution protein PAC1 from Candida albicans (strain SC5314 / ATCC MYA-2876) (Yeast).